The chain runs to 261 residues: Cytochrome c oxidase subunit 3 (261 aa).

Topologically, residues 1 to 15 are mitochondrial matrix; sequence MAHQAHAYHMVDPSP. A helical transmembrane segment spans residues 16–34; that stretch reads WPITGATAALLVTSGLAAW. The Mitochondrial intermembrane segment spans residues 35–40; it reads FHFNSM. Residues 41–66 traverse the membrane as a helical segment; it reads ILILMGLTLLLLTMYQWWRDIIREST. Residues 67 to 72 are Mitochondrial matrix-facing; that stretch reads FQGHHT. Residues 73-105 traverse the membrane as a helical segment; it reads LPVQKSLRYGMILFITSEVFFFLGFFWAFYHSS. Residues 106 to 128 lie on the Mitochondrial intermembrane side of the membrane; sequence LAPTPELGGLWPPTGITPLDPFE. The chain crosses the membrane as a helical span at residues 129-152; it reads VPLLNTAVLLASGITVTWAHHSLM. Residues 153-155 lie on the Mitochondrial matrix side of the membrane; sequence EGQ. Residues 156–183 traverse the membrane as a helical segment; sequence RKEAIQSLFITVLLGLYFTALQATEYYE. Residues 184-190 lie on the Mitochondrial intermembrane side of the membrane; the sequence is SPFTIAD. A helical transmembrane segment spans residues 191-223; sequence GAYGSTFFVATGFHGLHVIIGSTFLIVCLVRQT. At 224–232 the chain is on the mitochondrial matrix side; it reads QYHFTSNHH. The helical transmembrane segment at 233–256 threads the bilayer; sequence FGFEAAAWYWHFVDVVWLFLYVSI. Over 257–261 the chain is Mitochondrial intermembrane; it reads YWWGS.

Belongs to the cytochrome c oxidase subunit 3 family. As to quaternary structure, component of the cytochrome c oxidase (complex IV, CIV), a multisubunit enzyme composed of 14 subunits. The complex is composed of a catalytic core of 3 subunits MT-CO1, MT-CO2 and MT-CO3, encoded in the mitochondrial DNA, and 11 supernumerary subunits COX4I, COX5A, COX5B, COX6A, COX6B, COX6C, COX7A, COX7B, COX7C, COX8 and NDUFA4, which are encoded in the nuclear genome. The complex exists as a monomer or a dimer and forms supercomplexes (SCs) in the inner mitochondrial membrane with NADH-ubiquinone oxidoreductase (complex I, CI) and ubiquinol-cytochrome c oxidoreductase (cytochrome b-c1 complex, complex III, CIII), resulting in different assemblies (supercomplex SCI(1)III(2)IV(1) and megacomplex MCI(2)III(2)IV(2)).

It is found in the mitochondrion inner membrane. It catalyses the reaction 4 Fe(II)-[cytochrome c] + O2 + 8 H(+)(in) = 4 Fe(III)-[cytochrome c] + 2 H2O + 4 H(+)(out). Component of the cytochrome c oxidase, the last enzyme in the mitochondrial electron transport chain which drives oxidative phosphorylation. The respiratory chain contains 3 multisubunit complexes succinate dehydrogenase (complex II, CII), ubiquinol-cytochrome c oxidoreductase (cytochrome b-c1 complex, complex III, CIII) and cytochrome c oxidase (complex IV, CIV), that cooperate to transfer electrons derived from NADH and succinate to molecular oxygen, creating an electrochemical gradient over the inner membrane that drives transmembrane transport and the ATP synthase. Cytochrome c oxidase is the component of the respiratory chain that catalyzes the reduction of oxygen to water. Electrons originating from reduced cytochrome c in the intermembrane space (IMS) are transferred via the dinuclear copper A center (CU(A)) of subunit 2 and heme A of subunit 1 to the active site in subunit 1, a binuclear center (BNC) formed by heme A3 and copper B (CU(B)). The BNC reduces molecular oxygen to 2 water molecules using 4 electrons from cytochrome c in the IMS and 4 protons from the mitochondrial matrix. This is Cytochrome c oxidase subunit 3 (MT-CO3) from Latimeria chalumnae (Coelacanth).